The following is a 356-amino-acid chain: Fructose-1,6-bisphosphatase class 1 (356 aa).

Positions 1–26 are disordered; it reads MAREWPMTHPSNHPMDHHHQTLQAHL. Mg(2+) contacts are provided by E101, D120, L122, and D123. Substrate-binding positions include 123–126 and N211; that span reads DGSS. Position 283 (E283) interacts with Mg(2+).

The protein belongs to the FBPase class 1 family. Homotetramer. It depends on Mg(2+) as a cofactor.

Its subcellular location is the cytoplasm. It catalyses the reaction beta-D-fructose 1,6-bisphosphate + H2O = beta-D-fructose 6-phosphate + phosphate. It participates in carbohydrate biosynthesis; Calvin cycle. This Bradyrhizobium sp. (strain ORS 278) protein is Fructose-1,6-bisphosphatase class 1.